A 666-amino-acid polypeptide reads, in one-letter code: MACPTRRGRQQPGFACEECRRRKARCDRVRPKCGFCTENELQCVFVDKRQQRGPIKGQITSMQSQLATLRWQLDRYLRHRPPPSITMAGELDEPPADIQTMLDDFDVQVAALKQDATATTTMSTSTALMPAPAISSKDAAPAGAGLSWPDPTWLDRQWQDVSSTSLVPPSDLTVSSATTLTDPLSFDLLNETPPPPSTTTTTSTTRRDSCTKVMLTDLIRAELDQLYFDRVHAFCPIIHRRRYFARVARDSHTPAQACLQFAMRTLAAAMSAHCHLSEHLYAETKALLETHSQTPATPRDKVPLEHIQAWLLLSHYELLRIGVHQAMLTAGRAFRLVQMARLSELDAGSDRQLSPPSSSPPSSLTLSPSGENAENFVDAEEGRRTFWLAYCFDRLLCLQNEWPLTLQEEMILTRLPSLEHNYQNNLPARTPFLTEAMAQTGQSTMSPFAECIIMATLHGRCMTHRRFYANSNSTASGSEFESGAATRDFCIRQNWLSNAVDRRVQMLQQVSSPAVDSDPMLLFTQTLGYRATMHLSDTVQQVSWRALASSPVDQQLLSPGATMSLSAAAYHQMASHAAGEIVRLAKAVPSLSPFKAHPFLPDTLACAATFLSTGSPDPTGGEGVQHLLRVLSELRDTHSLARDYLQGLSVQTQDEDHRQDTRWYCT.

Positions 16–43 form a DNA-binding region, zn(2)-C6 fungal-type; that stretch reads CEECRRRKARCDRVRPKCGFCTENELQC. Disordered stretches follow at residues 184 to 206 and 347 to 373; these read LSFD…STTR and AGSD…GENA. Positions 353–369 are enriched in low complexity; the sequence is LSPPSSSPPSSLTLSPS.

It is found in the nucleus. Functionally, transcription factor that regulates the expression of the gene cluster that mediates the biosynthesis of asperfuranone, a probable antitumor agent. This chain is Asperfuranone cluster transcription factor afoA, found in Emericella nidulans (strain FGSC A4 / ATCC 38163 / CBS 112.46 / NRRL 194 / M139) (Aspergillus nidulans).